We begin with the raw amino-acid sequence, 2475 residues long: Non-reducing polyketide synthase ausA (2475 aa).

The segment at 14–253 (VLFGSKYSEI…HHADHLSAAQ (240 aa)) is N-terminal acylcarrier protein transacylase domain (SAT). Positions 384-800 (SIPIAVTGLA…GSNAAIVLKE (417 aa)) constitute a Ketosynthase family 3 (KS3) domain. Residues Cys-549, His-684, and His-723 each act as for beta-ketoacyl synthase activity in the active site. The interval 910–1212 (LCFGGQTGNK…CPMDLSGPQA (303 aa)) is malonyl-CoA:ACP transacylase (MAT) domain. The active-site For acyl/malonyl transferase activity is Ser-997. The segment at 1279-1407 (EDLKLVQLLK…GTISLSPGAD (129 aa)) is N-terminal hotdog fold. Positions 1279-1586 (EDLKLVQLLK…FTSVSIQSLR (308 aa)) constitute a PKS/mFAS DH domain. The product template (PT) domain stretch occupies residues 1282 to 1585 (KLVQLLKNEG…TFTSVSIQSL (304 aa)). His-1312 (proton acceptor; for dehydratase activity) is an active-site residue. Residues 1435–1586 (SSSGLKRSTV…FTSVSIQSLR (152 aa)) form a C-terminal hotdog fold region. The active-site Proton donor; for dehydratase activity is Asp-1493. The Carrier domain maps to 1626–1703 (SSNGDDLRTV…ALVQRIFPGR (78 aa)). Residue Ser-1663 is modified to O-(pantetheine 4'-phosphoryl)serine. Positions 1865–2098 (QHTSEHKLLH…GFNWVDWTDN (234 aa)) are methyltransferase (CMeT) domain. The thioesterase (TE) domain stretch occupies residues 2127 to 2475 (SAIHEETVVY…YEFLRSHVGL (349 aa)). Catalysis depends on for thioesterase activity residues Ser-2250, Asp-2412, and His-2444.

The enzyme catalyses 3 malonyl-CoA + acetyl-CoA + 2 S-adenosyl-L-methionine = 3,5-dimethylorsellinate + 2 S-adenosyl-L-homocysteine + 3 CO2 + 4 CoA. It participates in secondary metabolite biosynthesis; terpenoid biosynthesis. Non-reducing polyketide synthase; part of the gene cluster A that mediates the biosynthesis of the fungal meroterpenoid acetoxydehydroaustin. The first step of the pathway is the synthesis of 3,5-dimethylorsellinic acid by the polyketide synthase ausA. 3,5-dimethylorsellinic acid is then prenylated by the polyprenyl transferase ausN. Further epoxidation by the FAD-dependent monooxygenase ausM and cyclization by the probable terpene cyclase ausL lead to the formation of protoaustinoid A. Protoaustinoid A is then oxidized to spiro-lactone preaustinoid A3 by the combined action of the FAD-binding monooxygenases ausB and ausC, and the dioxygenase ausE. Acid-catalyzed keto-rearrangement and ring contraction of the tetraketide portion of preaustinoid A3 by ausJ lead to the formation of preaustinoid A4. The aldo-keto reductase ausK, with the help of ausH, is involved in the next step by transforming preaustinoid A4 into isoaustinone which is in turn hydroxylated by the P450 monooxygenase ausI to form austinolide. The cytochrome P450 monooxygenase ausG then modifies austinolide to austinol. Austinol is further acetylated to austin by the O-acetyltransferase ausP, which spontaneously changes to dehydroaustin. The cytochrome P450 monooxygenase then converts dehydroaustin is into 7-dehydrodehydroaustin. The hydroxylation catalyzed by ausR permits the second O-acetyltransferase ausQ to add an additional acetyl group to the molecule, leading to the formation of acetoxydehydroaustin. Due to genetic rearrangements of the clusters and the subsequent loss of some enzymes, the end product of the Penicillium brasilianum austinoid biosynthesis clusters is acetoxydehydroaustin. The sequence is that of Non-reducing polyketide synthase ausA from Penicillium brasilianum.